Here is a 458-residue protein sequence, read N- to C-terminus: Fumarate hydratase class II 2 (458 aa).

Substrate-binding positions include 98 to 100 (SGT), 123 to 126 (NPND), 133 to 135 (SSN), and threonine 181. Histidine 182 acts as the Proton donor/acceptor in catalysis. The active site involves serine 312. Substrate is bound by residues serine 313 and 318–320 (KVN).

It belongs to the class-II fumarase/aspartase family. Fumarase subfamily. In terms of assembly, homotetramer.

The protein resides in the cytoplasm. It carries out the reaction (S)-malate = fumarate + H2O. It participates in carbohydrate metabolism; tricarboxylic acid cycle; (S)-malate from fumarate: step 1/1. Its function is as follows. Involved in the TCA cycle. Catalyzes the stereospecific interconversion of fumarate to L-malate. This is Fumarate hydratase class II 2 from Pseudomonas aeruginosa (strain ATCC 15692 / DSM 22644 / CIP 104116 / JCM 14847 / LMG 12228 / 1C / PRS 101 / PAO1).